The following is a 92-amino-acid chain: Alpha-conotoxin-like Rt20.1 (92 aa).

An N-terminal signal peptide occupies residues 1 to 24 (MPKLEMMLLVLLILPLSYFSAAGG). Residues 25–45 (QVVQGDLRSDVLARYLQRGDR) constitute a propeptide that is removed on maturation. The residue at position 49 (Glu49) is a 4-carboxyglutamate. Pro55 carries the post-translational modification 4-hydroxyproline. 4 cysteine pairs are disulfide-bonded: Cys63–Cys72, Cys68–Cys80, Cys73–Cys90, and Cys78–Cys92.

This sequence belongs to the conotoxin D superfamily. Hetero-, homo- or pseudo-homodimer (identical sequence, different post-translational modifications). Expressed by the venom duct.

Its subcellular location is the secreted. Alpha-conotoxins act on postsynaptic membranes, they bind to the nicotinic acetylcholine receptors (nAChR) and thus inhibit them. Through its two C-terminal domains, this homodimeric protein would bind to two nAChR allosteric sites, located outside the nAChR C-loop of the principal binding face and at the adjacent binding interface in a clockwise direction. This toxin specifically blocks mammalian neuronal nAChR of the alpha-7/CHRNA7, alpha-3-beta-2/CHRNA3-CHRNB2 and alpha-4-beta-2/CHRNA4-CHRNB2 subtypes. This is Alpha-conotoxin-like Rt20.1 from Conus rattus (Rat cone).